The chain runs to 144 residues: MLLPKRVKYRRQHRPKTTGRSKGGNEVTFGEYGLQATTAAWITSRQIESARIAMTRYMKRGGKVWIKIFPHTPYTKKPLEVRMGSGKGAVEGWVAVVKPGRIMFEIAGVPEEVAREALRLASHKLPVKTKFVKREELGGDTNES.

Residues 1–19 (MLLPKRVKYRRQHRPKTTG) are compositionally biased toward basic residues. The disordered stretch occupies residues 1-26 (MLLPKRVKYRRQHRPKTTGRSKGGNE).

This sequence belongs to the universal ribosomal protein uL16 family. Part of the 50S ribosomal subunit.

In terms of biological role, binds 23S rRNA and is also seen to make contacts with the A and possibly P site tRNAs. This chain is Large ribosomal subunit protein uL16, found in Macrococcus caseolyticus (strain JCSC5402) (Macrococcoides caseolyticum).